Here is a 284-residue protein sequence, read N- to C-terminus: Four and a half LIM domains protein 5 (284 aa).

The C4-type zinc finger occupies 8 to 32; that stretch reads CQYCMASLLGKKYVLKDDNPYCVSC. 4 LIM zinc-binding domains span residues 39–100, 101–160, 161–220, and 223–283; these read NYCE…ECSS, KCFH…KEFA, HYCS…LYAK, and AACT…VDTD.

In terms of assembly, interacts with CREM (via the third LIM domain). Interacts (via second LIM domain) with SPAG8.

The protein resides in the nucleus. May be involved in the regulation of spermatogenesis. Stimulates CREM transcriptional activity in a phosphorylation-independent manner. The protein is Four and a half LIM domains protein 5 (FHL5) of Bos taurus (Bovine).